We begin with the raw amino-acid sequence, 358 residues long: MKPIHTIHRRESKQIFVGNVAIGGDAPISVQSMTNTKTTDVKATLKQISEIEEAGADLVRVSIPTMEAARAFKVIKEQVTIPLIADIHFDYKIALEVAKYGADCLRINPGNIGRVDYISEVVASAKDHDIPIRIGVNAGSLEKYLQKKYTRPTPEAMVESALRHIDILDKLNFDNFKISLKASEIFMTVFAYQQLSSQIDNPLHLGITEAGSLSFGTVKSSIGLGLLLSKGIGDTIRVSLASDPVDEVRVAFNILKSLNLRQKGVNLIACPSCSRQKFDVIKVVSELESRFKDIITPIDVSVIGCVVNGPGEAKSVSVGLTGGDPNLLYLDGKTHSKIINENLVNELEAQVRNSLKNL.

Positions 270, 273, 305, and 312 each coordinate [4Fe-4S] cluster.

This sequence belongs to the IspG family. It depends on [4Fe-4S] cluster as a cofactor.

It catalyses the reaction (2E)-4-hydroxy-3-methylbut-2-enyl diphosphate + oxidized [flavodoxin] + H2O + 2 H(+) = 2-C-methyl-D-erythritol 2,4-cyclic diphosphate + reduced [flavodoxin]. The protein operates within isoprenoid biosynthesis; isopentenyl diphosphate biosynthesis via DXP pathway; isopentenyl diphosphate from 1-deoxy-D-xylulose 5-phosphate: step 5/6. Its function is as follows. Converts 2C-methyl-D-erythritol 2,4-cyclodiphosphate (ME-2,4cPP) into 1-hydroxy-2-methyl-2-(E)-butenyl 4-diphosphate. In Vesicomyosocius okutanii subsp. Calyptogena okutanii (strain HA), this protein is 4-hydroxy-3-methylbut-2-en-1-yl diphosphate synthase (flavodoxin).